The sequence spans 372 residues: F-box/kelch-repeat protein At4g14905 (372 aa).

An F-box domain is found at 34–74; sequence LHDEIAVSCFARVPRCYYPAISLVCRNFRRLMASPEIYIER. Kelch repeat units follow at residues 137 to 183, 184 to 229, and 232 to 280; these read ETYV…LIDG, KLYV…FFVM, and KIYR…CMNQ.

The protein is F-box/kelch-repeat protein At4g14905 of Arabidopsis thaliana (Mouse-ear cress).